Reading from the N-terminus, the 88-residue chain is Alkene monooxygenase system, oxygenase component subunit gamma (88 aa).

This sequence belongs to the TmoB/XamoB family. In terms of assembly, the alkene monooxygenase multicomponent enzyme system is composed of an electron transfer component and a monooxygenase component interacting with the effector protein XamoD. The electron transfer component is composed of a ferredoxin reductase (XamoF) and a ferredoxin (XamoC), and the monooxygenase component is formed by a heterohexamer (dimer of heterotrimers) of two alpha subunits (XamoA), two beta subunits (XamoE) and two gamma subunits (XamoB).

It is found in the cytoplasm. The catalysed reaction is propene + NADH + O2 + H(+) = 1,2-epoxypropane + NAD(+) + H2O. With respect to regulation, inhibited by propyne. Functionally, component of the alkene monooxygenase multicomponent enzyme system which catalyzes the O2- and NADH-dependent epoxidation of short chain (C2 to C6) alkenes to their corresponding epoxides. Also able to catalyze the oxidation of a number of chlorinated alkenes, including trichloroethylene, cis- and trans-1,2-dichloroethylene, vinyl chloride, 1-chloropropylene, 1,3-dichloropropylene and 2,3-dichloropropylene. The polypeptide is Alkene monooxygenase system, oxygenase component subunit gamma (Xanthobacter autotrophicus (strain ATCC BAA-1158 / Py2)).